Reading from the N-terminus, the 729-residue chain is Fatty acid oxidation complex subunit alpha (729 aa).

An enoyl-CoA hydratase/isomerase region spans residues 1–189 (MLYQSETLQL…KIGLVDAVVD (189 aa)). A substrate-binding site is contributed by aspartate 296. The interval 311 to 729 (AAPKLAAVLG…LLDVSTNQPA (419 aa)) is 3-hydroxyacyl-CoA dehydrogenase. NAD(+) is bound by residues methionine 324, aspartate 343, 400-402 (VVE), lysine 407, and serine 429. Catalysis depends on histidine 450, which acts as the For 3-hydroxyacyl-CoA dehydrogenase activity. Residue asparagine 453 participates in NAD(+) binding. Substrate contacts are provided by asparagine 500 and tyrosine 660.

The protein in the N-terminal section; belongs to the enoyl-CoA hydratase/isomerase family. In the C-terminal section; belongs to the 3-hydroxyacyl-CoA dehydrogenase family. In terms of assembly, heterotetramer of two alpha chains (FadB) and two beta chains (FadA).

It catalyses the reaction a (3S)-3-hydroxyacyl-CoA + NAD(+) = a 3-oxoacyl-CoA + NADH + H(+). It carries out the reaction a (3S)-3-hydroxyacyl-CoA = a (2E)-enoyl-CoA + H2O. The enzyme catalyses a 4-saturated-(3S)-3-hydroxyacyl-CoA = a (3E)-enoyl-CoA + H2O. The catalysed reaction is (3S)-3-hydroxybutanoyl-CoA = (3R)-3-hydroxybutanoyl-CoA. It catalyses the reaction a (3Z)-enoyl-CoA = a 4-saturated (2E)-enoyl-CoA. It carries out the reaction a (3E)-enoyl-CoA = a 4-saturated (2E)-enoyl-CoA. It participates in lipid metabolism; fatty acid beta-oxidation. In terms of biological role, involved in the aerobic and anaerobic degradation of long-chain fatty acids via beta-oxidation cycle. Catalyzes the formation of 3-oxoacyl-CoA from enoyl-CoA via L-3-hydroxyacyl-CoA. It can also use D-3-hydroxyacyl-CoA and cis-3-enoyl-CoA as substrate. The sequence is that of Fatty acid oxidation complex subunit alpha from Yersinia pestis bv. Antiqua (strain Antiqua).